A 697-amino-acid chain; its full sequence is Potassium-transporting ATPase ATP-binding subunit (697 aa).

The next 4 membrane-spanning stretches (helical) occupy residues 36 to 56, 66 to 86, 218 to 238, and 253 to 273; these read VMFV…RDLI, LQII…EAVA, IALN…TATI, and VLVA…LSAI. Asp-306 (4-aspartylphosphate intermediate) is an active-site residue. ATP contacts are provided by residues Asp-343, Glu-347, 376-383, and Lys-394; that span reads FTAQTRMS. The Mg(2+) site is built by Asp-526 and Asp-530. 3 helical membrane passes run 595-615, 631-651, and 669-689; these read YFAI…QSTG, AILS…PLSL, and LLVY…IIDM.

This sequence belongs to the cation transport ATPase (P-type) (TC 3.A.3) family. Type IA subfamily. In terms of assembly, the system is composed of three essential subunits: KdpA, KdpB and KdpC.

The protein resides in the cell inner membrane. The catalysed reaction is K(+)(out) + ATP + H2O = K(+)(in) + ADP + phosphate + H(+). Part of the high-affinity ATP-driven potassium transport (or Kdp) system, which catalyzes the hydrolysis of ATP coupled with the electrogenic transport of potassium into the cytoplasm. This subunit is responsible for energy coupling to the transport system and for the release of the potassium ions to the cytoplasm. This chain is Potassium-transporting ATPase ATP-binding subunit, found in Mesorhizobium japonicum (strain LMG 29417 / CECT 9101 / MAFF 303099) (Mesorhizobium loti (strain MAFF 303099)).